Reading from the N-terminus, the 341-residue chain is Hypophosphite import ATP-binding protein HtxD (341 aa).

In terms of domain architecture, ABC transporter spans leucine 6 to alanine 249. Glycine 38–serine 45 is an ATP binding site. The interval isoleucine 278–glycine 341 is disordered. Basic and acidic residues-rich tracts occupy residues alanine 307 to threonine 320 and glycine 327 to glycine 341.

Belongs to the ABC transporter superfamily. Phosphonates importer (TC 3.A.1.9.1) family. The complex is composed of two ATP-binding proteins (HtxD), two transmembrane proteins (HtxC and HtxE) and a solute-binding protein (HtxB).

It is found in the cell inner membrane. It carries out the reaction phosphinate(out) + ATP + H2O = phosphinate(in) + ADP + phosphate + H(+). In terms of biological role, part of the ABC transporter complex HtxBCDE involved in hypophosphite import. Responsible for energy coupling to the transport system. The polypeptide is Hypophosphite import ATP-binding protein HtxD (htxD) (Stutzerimonas stutzeri (Pseudomonas stutzeri)).